Reading from the N-terminus, the 300-residue chain is Ribonuclease HIII (300 aa).

The 218-residue stretch at 83-300 folds into the RNase H type-2 domain; the sequence is IPIIGSDEVG…THKAQALLTK (218 aa). Residues aspartate 89, glutamate 90, and aspartate 194 each coordinate a divalent metal cation.

It belongs to the RNase HII family. RnhC subfamily. Mn(2+) is required as a cofactor. Requires Mg(2+) as cofactor.

The protein resides in the cytoplasm. It catalyses the reaction Endonucleolytic cleavage to 5'-phosphomonoester.. Its function is as follows. Endonuclease that specifically degrades the RNA of RNA-DNA hybrids. The sequence is that of Ribonuclease HIII from Streptococcus pyogenes serotype M5 (strain Manfredo).